The primary structure comprises 360 residues: Histidinol-phosphate aminotransferase (360 aa).

The residue at position 223 (Lys223) is an N6-(pyridoxal phosphate)lysine.

It belongs to the class-II pyridoxal-phosphate-dependent aminotransferase family. Histidinol-phosphate aminotransferase subfamily. Homodimer. Requires pyridoxal 5'-phosphate as cofactor.

It catalyses the reaction L-histidinol phosphate + 2-oxoglutarate = 3-(imidazol-4-yl)-2-oxopropyl phosphate + L-glutamate. The protein operates within amino-acid biosynthesis; L-histidine biosynthesis; L-histidine from 5-phospho-alpha-D-ribose 1-diphosphate: step 7/9. The sequence is that of Histidinol-phosphate aminotransferase from Bacillus velezensis (strain DSM 23117 / BGSC 10A6 / LMG 26770 / FZB42) (Bacillus amyloliquefaciens subsp. plantarum).